A 512-amino-acid polypeptide reads, in one-letter code: Ferredoxin--nitrite reductase (512 aa).

[4Fe-4S] cluster-binding residues include C396, C402, C437, and C441. C441 contacts siroheme.

This sequence belongs to the nitrite and sulfite reductase 4Fe-4S domain family.

The catalysed reaction is 6 oxidized [2Fe-2S]-[ferredoxin] + NH4(+) + 2 H2O = nitrite + 6 reduced [2Fe-2S]-[ferredoxin] + 8 H(+). The chain is Ferredoxin--nitrite reductase (nirA) from Synechococcus elongatus (strain ATCC 33912 / PCC 7942 / FACHB-805) (Anacystis nidulans R2).